An 826-amino-acid polypeptide reads, in one-letter code: Periplasmic nitrate reductase (826 aa).

A signal peptide (tat-type signal) is located at residues Met-1–Ala-32. Residues Ile-39–Asp-95 enclose the 4Fe-4S Mo/W bis-MGD-type domain. The [4Fe-4S] cluster site is built by Cys-46, Cys-49, Cys-53, and Cys-81. Mo-bis(molybdopterin guanine dinucleotide) contacts are provided by residues Lys-83, Gln-150, Asn-175, Cys-179, Trp-212–Met-219, Gln-262–Asp-264, Met-372, Gln-376, Asn-482, Ser-508–Asp-509, Lys-531, Asp-558, and Thr-716–Thr-725. Residue Phe-792 coordinates substrate. Residues Asn-800 and Lys-817 each coordinate Mo-bis(molybdopterin guanine dinucleotide).

Belongs to the prokaryotic molybdopterin-containing oxidoreductase family. NasA/NapA/NarB subfamily. In terms of assembly, component of the periplasmic nitrate reductase NapAB complex composed of NapA and NapB. The cofactor is [4Fe-4S] cluster. Mo-bis(molybdopterin guanine dinucleotide) serves as cofactor. Post-translationally, predicted to be exported by the Tat system. The position of the signal peptide cleavage has not been experimentally proven.

It localises to the periplasm. The catalysed reaction is 2 Fe(II)-[cytochrome] + nitrate + 2 H(+) = 2 Fe(III)-[cytochrome] + nitrite + H2O. Functionally, catalytic subunit of the periplasmic nitrate reductase complex NapAB. Receives electrons from NapB and catalyzes the reduction of nitrate to nitrite. The sequence is that of Periplasmic nitrate reductase from Shewanella halifaxensis (strain HAW-EB4).